A 135-amino-acid chain; its full sequence is Small ribosomal subunit protein bS16m (135 aa).

The transit peptide at 1–34 directs the protein to the mitochondrion; it reads MVQLTTIFCKAYHGGHLTIRLALGGCTNRPFYRI.

Belongs to the bacterial ribosomal protein bS16 family. In terms of assembly, component of the mitochondrial ribosome small subunit (28S) which comprises a 12S rRNA and about 30 distinct proteins.

It localises to the mitochondrion. This Mus musculus (Mouse) protein is Small ribosomal subunit protein bS16m (Mrps16).